The sequence spans 171 residues: Small ribosomal subunit protein uS5 (171 aa).

An S5 DRBM domain is found at 13–76 (FLERLVAVNR…DQAKKNLVTI (64 aa)).

This sequence belongs to the universal ribosomal protein uS5 family. As to quaternary structure, part of the 30S ribosomal subunit. Contacts proteins S4 and S8.

In terms of biological role, with S4 and S12 plays an important role in translational accuracy. Located at the back of the 30S subunit body where it stabilizes the conformation of the head with respect to the body. The protein is Small ribosomal subunit protein uS5 of Dichelobacter nodosus (strain VCS1703A).